A 302-amino-acid chain; its full sequence is Probable lipid kinase YegS-like (302 aa).

The region spanning 1–129 (MDKDKVLLVL…IDLGEVNGKL (129 aa)) is the DAGKc domain. ATP contacts are provided by residues threonine 39, 65-71 (GDGTLRE), and threonine 92. Residues arginine 210, aspartate 213, and leucine 215 each coordinate Mg(2+). Catalysis depends on glutamate 268, which acts as the Proton acceptor.

Belongs to the diacylglycerol/lipid kinase family. YegS lipid kinase subfamily. Requires Mg(2+) as cofactor. Ca(2+) serves as cofactor.

It is found in the cytoplasm. Its function is as follows. Probably phosphorylates lipids; the in vivo substrate is unknown. The polypeptide is Probable lipid kinase YegS-like (Pseudomonas aeruginosa (strain ATCC 15692 / DSM 22644 / CIP 104116 / JCM 14847 / LMG 12228 / 1C / PRS 101 / PAO1)).